A 2210-amino-acid chain; its full sequence is Genome polyprotein (2210 aa).

The tract at residues 1–24 is disordered; sequence MAPVVSRDQCKPKTPKPHRPAPPH. The segment covering 13–22 has biased composition (basic residues); it reads KTPKPHRPAP. The SF3 helicase domain occupies 426–585; the sequence is SNKIVELSTM…ADFLRQHPGV (160 aa). ATP is bound at residue 456–463; sequence GPPGHGKS. Tyr940 bears the O-(5'-phospho-RNA)-tyrosine mark. The region spanning 991-1136 is the Peptidase C24 domain; sequence GNNCDDIPLH…KVITPITPEP (146 aa). Residues His1025, Asp1039, and Cys1103 each act as for 3CLpro activity in the active site. The region spanning 1379-1501 is the RdRp catalytic domain; it reads DHCLELDYSK…TIPSHLTKSI (123 aa). The tract at residues 1656 to 1685 is disordered; it reads LIREGNMSDNKSIPEQQHESSRAMDAGATG.

Post-translationally, specific enzymatic cleavages by its own cysteine protease yield mature proteins. The protease cleaves itself from the nascent polyprotein autocatalytically. Precursor p41 can be cleaved by viral 3CLpro into protein p19 and VPg, or cleaved by host protease into protein p23/2 and protein p18. VPg is uridylylated by the polymerase and is covalently attached to the 5'-end of the polyadenylated genomic and subgenomic RNAs. This uridylylated form acts as a nucleotide-peptide primer for the polymerase.

The protein localises to the virion. It is found in the host cytoplasm. The catalysed reaction is a ribonucleoside 5'-triphosphate + H2O = a ribonucleoside 5'-diphosphate + phosphate + H(+). It carries out the reaction Endopeptidase with a preference for cleavage when the P1 position is occupied by Glu-|-Xaa and the P1' position is occupied by Gly-|-Yaa.. It catalyses the reaction RNA(n) + a ribonucleoside 5'-triphosphate = RNA(n+1) + diphosphate. Displays NTPase activity, but no helicase activity. Induces the formation of convoluted membranes derived from the host ER. These remodeled membranes probably form the viral factories that contain the replication complex. Together with NS2 and NS4, initiates the formation of the replication complex. Its function is as follows. Viral genome-linked protein is covalently linked to the 5'-end of the positive-strand, negative-strand genomic RNAs and subgenomic RNA. Acts as a genome-linked replication primer. May recruit ribosome to viral RNA thereby promoting viral proteins translation. Interacts with host translation initiation complex to allow the translation of viral proteins. Functionally, processes the polyprotein. 3CLpro-RdRp is first released by autocleavage, then all other proteins are cleaved. May cleave polyadenylate-binding protein thereby inhibiting cellular translation. In terms of biological role, replicates genomic and antigenomic RNA by recognizing replications specific signals. Also transcribes a subgenomic mRNA by initiating RNA synthesis internally on antigenomic RNA. This sgRNA codes for structural proteins. Catalyzes the covalent attachment VPg with viral RNAs. Capsid protein self assembles to form an icosahedral capsid with a T=3 symmetry, about 35 nm in diameter, and consisting of 180 capsid proteins. A smaller form of capsid with a diameter of 23 nm might be capsid proteins assembled as icosahedron with T=1 symmetry. The capsid encapsulate VP2 proteins and genomic or subgenomic RNA. Attaches virion to target cells by binding histo-blood group antigens, inducing endocytosis of the viral particle. Acidification of the endosome induces conformational change of capsid protein thereby injecting virus genomic RNA into host cytoplasm. This Bovine enteric calicivirus NB (isolate Bovine/United States/N ebraska/1980) (BEC-NB) protein is Genome polyprotein.